Consider the following 204-residue polypeptide: UPF0134 protein MPN_655 (204 aa).

A disordered region spans residues 46-132; sequence EVENKPKIPI…FNEFKDSNNQ (87 aa). Residues 64–80 are compositionally biased toward pro residues; the sequence is SPKPLKPPKPPKPPKGP. Residues 117–132 show a composition bias toward basic and acidic residues; the sequence is YVTRKEFNEFKDSNNQ.

This sequence belongs to the UPF0134 family.

The protein is UPF0134 protein MPN_655 of Mycoplasma pneumoniae (strain ATCC 29342 / M129 / Subtype 1) (Mycoplasmoides pneumoniae).